The primary structure comprises 145 residues: 3-hydroxyacyl-[acyl-carrier-protein] dehydratase FabZ (145 aa).

The active site involves His47.

The protein belongs to the thioester dehydratase family. FabZ subfamily.

It is found in the cytoplasm. The enzyme catalyses a (3R)-hydroxyacyl-[ACP] = a (2E)-enoyl-[ACP] + H2O. Functionally, involved in unsaturated fatty acids biosynthesis. Catalyzes the dehydration of short chain beta-hydroxyacyl-ACPs and long chain saturated and unsaturated beta-hydroxyacyl-ACPs. This is 3-hydroxyacyl-[acyl-carrier-protein] dehydratase FabZ from Acidovorax sp. (strain JS42).